The chain runs to 672 residues: Fumonisin cluster-specific transcription factor FUM21 (672 aa).

Positions 30–56 form a DNA-binding region, zn(2)-C6 fungal-type; that stretch reads CESCKRRKVRCNGTNPCNQCQKSSIEC. Disordered stretches follow at residues 65 to 111 and 190 to 212; these read ANDG…RFDG and KSSG…GFNT. The segment covering 77-93 has biased composition (polar residues); that stretch reads SPVQHTRGSLTPPQTSP.

It is found in the nucleus. Its function is as follows. Transcription factor that regulates the expression of the gene cluster that mediates the biosynthesis of fumonisins B1 (FB1), B2 (FB2), B3 (FB3), and B4 (FB4), which are carcinogenic mycotoxins. The chain is Fumonisin cluster-specific transcription factor FUM21 (FUM21) from Gibberella moniliformis (strain M3125 / FGSC 7600) (Maize ear and stalk rot fungus).